The chain runs to 435 residues: Zinc finger and BTB domain-containing protein 25 (435 aa).

In terms of domain architecture, BTB spans 1 to 107; it reads MDTASHSLVL…GIRFLHADYL (107 aa). Residues lysine 142, lysine 148, lysine 198, and lysine 204 each participate in a glycyl lysine isopeptide (Lys-Gly) (interchain with G-Cter in SUMO2) cross-link. The C2H2-type 1 zinc finger occupies 238–260; sequence HLCHYCGERFDSRSNLRQHLHTH. Residues lysine 303 and lysine 330 each participate in a glycyl lysine isopeptide (Lys-Gly) (interchain with G-Cter in SUMO2) cross-link. Residues 349–371 form a C2H2-type 2 zinc finger; sequence MSCTICGHKFPRKSQLLEHMYTH. Residue lysine 405 forms a Glycyl lysine isopeptide (Lys-Gly) (interchain with G-Cter in SUMO2) linkage.

In terms of tissue distribution, expressed mainly in hematopoietic cells and testis.

It localises to the nucleus. May be involved in transcriptional regulation. The sequence is that of Zinc finger and BTB domain-containing protein 25 (ZBTB25) from Homo sapiens (Human).